The sequence spans 366 residues: Mitochondrial substrate carrier family protein H (366 aa).

Residues 1–25 (MLSNSVNNNNNNNNINNSNSNNNDS) show a composition bias toward low complexity. A disordered region spans residues 1–26 (MLSNSVNNNNNNNNINNSNSNNNDSN). Solcar repeat units follow at residues 29–121 (KNVK…LKEY), 132–243 (NIYT…LKNK), and 259–360 (SPFF…IKQS). Helical transmembrane passes span 35-55 (MVAS…LDVV), 96-112 (GVTP…TIYF), 133-151 (IYTV…SASV), 175-192 (VAMA…IPLS), 262-282 (FINF…TTPI), and 340-357 (VAKV…FEYI).

Belongs to the mitochondrial carrier (TC 2.A.29) family.

The protein localises to the mitochondrion inner membrane. In terms of biological role, mitochondrial transporter required for glutathione import into mitochondria. The chain is Mitochondrial substrate carrier family protein H from Dictyostelium discoideum (Social amoeba).